The chain runs to 717 residues: Ubiquitin carboxyl-terminal hydrolase 11 (717 aa).

The tract at residues 231 to 268 is disordered; that stretch reads ATAPPVHSLEVSSQIRDSSQDSSSSLSKVEKPKEEEGK. Low complexity predominate over residues 242–257; the sequence is SSQIRDSSQDSSSSLS. Positions 258-268 are enriched in basic and acidic residues; sequence KVEKPKEEEGK. In terms of domain architecture, USP spans 298–707; it reads TGLQNPCNTC…EVYVLFYERM (410 aa). The active-site Nucleophile is the cysteine 307. The segment at 531–577 is disordered; the sequence is KKEEITSQKKKSTIFGFHSRSRSKSPHHHHHHHHSSDDSTKNAKKRN. The segment covering 549-564 has biased composition (basic residues); sequence SRSRSKSPHHHHHHHH. The active-site Proton acceptor is histidine 649.

The protein belongs to the peptidase C19 family.

It catalyses the reaction Thiol-dependent hydrolysis of ester, thioester, amide, peptide and isopeptide bonds formed by the C-terminal Gly of ubiquitin (a 76-residue protein attached to proteins as an intracellular targeting signal).. The polypeptide is Ubiquitin carboxyl-terminal hydrolase 11 (UBP11) (Saccharomyces cerevisiae (strain ATCC 204508 / S288c) (Baker's yeast)).